The following is a 189-amino-acid chain: Putative L,D-transpeptidase in ATP synthase subunits region ORF 5 (189 aa).

Residues 1–35 (MTDTLNRRAAMALGLASAAGAALATPALSQDAAPA) constitute a signal peptide (tat-type signal). The region spanning 59-189 (PMLVADTFSR…CPVGTRVRVI (131 aa)) is the L,D-TPase catalytic domain. His-149 acts as the Proton donor/acceptor in catalysis. Cys-165 acts as the Nucleophile in catalysis.

It belongs to the YkuD family. Predicted to be exported by the Tat system. The position of the signal peptide cleavage has not been experimentally proven.

Its pathway is cell wall biogenesis; peptidoglycan biosynthesis. In Fuscovulum blasticum (Rhodobacter blasticus), this protein is Putative L,D-transpeptidase in ATP synthase subunits region ORF 5.